A 277-amino-acid chain; its full sequence is Kallikrein-13 (277 aa).

An N-terminal signal peptide occupies residues 1–16; that stretch reads MWPLALVIASLTLALS. N-linked (GlcNAc...) asparagine glycosylation occurs at Asn30. The Peptidase S1 domain occupies 36-263; sequence LPGGYTCFPH…YVLWIRETIR (228 aa). Intrachain disulfides connect Cys42–Cys178, Cys61–Cys77, Cys157–Cys224, Cys189–Cys203, and Cys214–Cys239. Active-site charge relay system residues include His76 and Asp124. Ser218 serves as the catalytic Charge relay system. The N-linked (GlcNAc...) asparagine glycan is linked to Asn225.

Belongs to the peptidase S1 family. Kallikrein subfamily. In terms of tissue distribution, expressed in prostate, breast, testis and salivary gland.

The protein resides in the secreted. This Homo sapiens (Human) protein is Kallikrein-13 (KLK13).